The chain runs to 401 residues: Cartilage-associated protein (401 aa).

The signal sequence occupies residues 1–26 (MEPGRRGAAALLALLCVACALRAGRA). 2 N-linked (GlcNAc...) asparagine glycosylation sites follow: Asn87 and Asn363.

Belongs to the leprecan family. Found in articular chondrocytes. Expressed in a variety of tissues.

It is found in the secreted. It localises to the extracellular space. The protein resides in the extracellular matrix. In terms of biological role, necessary for efficient 3-hydroxylation of fibrillar collagen prolyl residues. This is Cartilage-associated protein (CRTAP) from Homo sapiens (Human).